We begin with the raw amino-acid sequence, 394 residues long: NAD(P)H-quinone oxidoreductase subunit H (394 aa).

It belongs to the complex I 49 kDa subunit family. In terms of assembly, NDH-1 can be composed of about 15 different subunits; different subcomplexes with different compositions have been identified which probably have different functions.

It is found in the cellular thylakoid membrane. It carries out the reaction a plastoquinone + NADH + (n+1) H(+)(in) = a plastoquinol + NAD(+) + n H(+)(out). The enzyme catalyses a plastoquinone + NADPH + (n+1) H(+)(in) = a plastoquinol + NADP(+) + n H(+)(out). Its function is as follows. NDH-1 shuttles electrons from an unknown electron donor, via FMN and iron-sulfur (Fe-S) centers, to quinones in the respiratory and/or the photosynthetic chain. The immediate electron acceptor for the enzyme in this species is believed to be plastoquinone. Couples the redox reaction to proton translocation, and thus conserves the redox energy in a proton gradient. Cyanobacterial NDH-1 also plays a role in inorganic carbon-concentration. The chain is NAD(P)H-quinone oxidoreductase subunit H from Nostoc sp. (strain PCC 7120 / SAG 25.82 / UTEX 2576).